Here is a 546-residue protein sequence, read N- to C-terminus: Tyrosine-protein kinase yes (546 aa).

The segment covering 1-18 has biased composition (basic and acidic residues); it reads MGCVKSKEDKGPTQKYRP. Residues 1–58 form a disordered region; that stretch reads MGCVKSKEDKGPTQKYRPDPTNPTPGSHMGLYGPDPTQMGQSPALKGPTNNYNSRSSG. Residue Gly2 is the site of N-myristoyl glycine attachment. Residue Cys3 is the site of S-palmitoyl cysteine; in membrane form attachment. Residues 48 to 58 are compositionally biased toward polar residues; sequence PTNNYNSRSSG. One can recognise an SH3 domain in the interval 94-155; that stretch reads GGVTFFVALY…PSNYVAPADS (62 aa). The region spanning 161–258 is the SH2 domain; sequence WYFGKMGRKD…GLCYRLTTVC (98 aa). Residues 280 to 533 enclose the Protein kinase domain; it reads LRLELKLGQG…YIQSFLEDYF (254 aa). ATP is bound by residues 286 to 294 and Lys308; that span reads LGQGCFGEV. Residue Asp399 is the Proton acceptor of the active site. At Tyr429 the chain carries Phosphotyrosine; by autocatalysis. Tyr540 is subject to Phosphotyrosine; by CSK.

Belongs to the protein kinase superfamily. Tyr protein kinase family. SRC subfamily. In terms of processing, autophosphorylation at Tyr-429 maintains enzyme activity. Palmitoylation at Cys-3 promotes membrane localization. Widely expressed.

The protein resides in the cell membrane. It localises to the cytoplasm. Its subcellular location is the cytoskeleton. The protein localises to the microtubule organizing center. It is found in the centrosome. The protein resides in the cytosol. It localises to the cell junction. The enzyme catalyses L-tyrosyl-[protein] + ATP = O-phospho-L-tyrosyl-[protein] + ADP + H(+). Functionally, non-receptor protein tyrosine kinase that is involved in the regulation of cell growth and survival, apoptosis, cell-cell adhesion, cytoskeleton remodeling, differentiation, G2/M progression and cytokinesis. Required for convergent extension cell movements during gastrulation, acting with fyna via rhoa. May be required for epiboly to occur, possibly through its effects in calcium signaling. During embryonic development, phosphorylates ptk2.1/fak. In Danio rerio (Zebrafish), this protein is Tyrosine-protein kinase yes (yes1).